The chain runs to 145 residues: D-aminoacyl-tRNA deacylase (145 aa).

The Gly-cisPro motif, important for rejection of L-amino acids signature appears at 137–138; it reads GP.

It belongs to the DTD family. As to quaternary structure, homodimer.

It is found in the cytoplasm. The catalysed reaction is glycyl-tRNA(Ala) + H2O = tRNA(Ala) + glycine + H(+). The enzyme catalyses a D-aminoacyl-tRNA + H2O = a tRNA + a D-alpha-amino acid + H(+). Its function is as follows. An aminoacyl-tRNA editing enzyme that deacylates mischarged D-aminoacyl-tRNAs. Also deacylates mischarged glycyl-tRNA(Ala), protecting cells against glycine mischarging by AlaRS. Acts via tRNA-based rather than protein-based catalysis; rejects L-amino acids rather than detecting D-amino acids in the active site. By recycling D-aminoacyl-tRNA to D-amino acids and free tRNA molecules, this enzyme counteracts the toxicity associated with the formation of D-aminoacyl-tRNA entities in vivo and helps enforce protein L-homochirality. This Limosilactobacillus fermentum (strain NBRC 3956 / LMG 18251) (Lactobacillus fermentum) protein is D-aminoacyl-tRNA deacylase.